Reading from the N-terminus, the 506-residue chain is Cysteine--tRNA ligase (506 aa).

Cys-43 is a binding site for Zn(2+). Residues 45 to 55 (VTVYDLCHLGH) carry the 'HIGH' region motif. Zn(2+) contacts are provided by Cys-237, His-262, and Glu-266. Positions 294–298 (KMSKS) match the 'KMSKS' region motif. Residue Lys-297 coordinates ATP.

It belongs to the class-I aminoacyl-tRNA synthetase family. As to quaternary structure, monomer. It depends on Zn(2+) as a cofactor.

The protein localises to the cytoplasm. It carries out the reaction tRNA(Cys) + L-cysteine + ATP = L-cysteinyl-tRNA(Cys) + AMP + diphosphate. The polypeptide is Cysteine--tRNA ligase (Synechococcus sp. (strain JA-3-3Ab) (Cyanobacteria bacterium Yellowstone A-Prime)).